Here is a 604-residue protein sequence, read N- to C-terminus: Sulfite reductase [NADPH] flavoprotein alpha-component (604 aa).

One can recognise a Flavodoxin-like domain in the interval 66–204 (VTVLSASQTG…AADGWTDNIA (139 aa)). FMN contacts are provided by residues 72–77 (SQTGNA), 119–122 (STQG), and 155–164 (LGDSSYPNFC). In terms of domain architecture, FAD-binding FR-type spans 239–453 (ADPFPAALLA…VERNDGFRLP (215 aa)). FAD-binding positions include Thr-327, Gln-361, 391-394 (RLYS), 409-411 (TVG), and 424-427 (GGAS). Residues 524–525 (SR), 530–534 (KIYVQ), and Asp-566 contribute to the NADP(+) site. FAD is bound at residue Tyr-604.

The protein belongs to the NADPH-dependent sulphite reductase flavoprotein subunit CysJ family. In the N-terminal section; belongs to the flavodoxin family. This sequence in the C-terminal section; belongs to the flavoprotein pyridine nucleotide cytochrome reductase family. Alpha(8)-beta(8). The alpha component is a flavoprotein, the beta component is a hemoprotein. FAD serves as cofactor. FMN is required as a cofactor.

The enzyme catalyses hydrogen sulfide + 3 NADP(+) + 3 H2O = sulfite + 3 NADPH + 4 H(+). Its pathway is sulfur metabolism; hydrogen sulfide biosynthesis; hydrogen sulfide from sulfite (NADPH route): step 1/1. Its function is as follows. Component of the sulfite reductase complex that catalyzes the 6-electron reduction of sulfite to sulfide. This is one of several activities required for the biosynthesis of L-cysteine from sulfate. The flavoprotein component catalyzes the electron flow from NADPH -&gt; FAD -&gt; FMN to the hemoprotein component. In Neisseria meningitidis serogroup A / serotype 4A (strain DSM 15465 / Z2491), this protein is Sulfite reductase [NADPH] flavoprotein alpha-component.